The primary structure comprises 366 residues: Mitogen-activated protein kinase 13 (366 aa).

A Protein kinase domain is found at 25-308; that stretch reads YLAPAHVGSG…AAQALAHPFF (284 aa). ATP contacts are provided by residues 31–39 and K54; that span reads VGSGAYGAV. D150 (proton acceptor) is an active-site residue. T180 is subject to Phosphothreonine; by MAP2K3, MAP2K4, MAP2K6 and MAP2K7. Residues 180 to 182 carry the TXY motif; sequence TGY. Y182 carries the post-translational modification Phosphotyrosine. The residue at position 350 (S350) is a Phosphoserine.

It belongs to the protein kinase superfamily. CMGC Ser/Thr protein kinase family. MAP kinase subfamily. As to quaternary structure, interacts with MAPK8IP2. It depends on Mg(2+) as a cofactor. Dually phosphorylated on Thr-180 and Tyr-182 by MAP2K3/MKK3, MAP2K4/MKK4, MAP2K6/MKK6 and MAP2K7/MKK7, which activates the enzyme. Dephosphorylated by dual specificity phosphatase DUSP1.

The enzyme catalyses L-seryl-[protein] + ATP = O-phospho-L-seryl-[protein] + ADP + H(+). It catalyses the reaction L-threonyl-[protein] + ATP = O-phospho-L-threonyl-[protein] + ADP + H(+). With respect to regulation, activated by phosphorylation on threonine and tyrosine by dual specificity kinases, MAP2K3/MKK3, MAP2K6/MKK6, MAP2K4/MKK4 and MAP2K7/MKK7. Activation by ultraviolet radiation, hyperosmotic shock, anisomycin or by TNF-alpha is mediated by MAP2K3/MKK3. Inhibited by dual specificity phosphatase DUSP1. Its function is as follows. Serine/threonine kinase which acts as an essential component of the MAP kinase signal transduction pathway. MAPK13 is one of the four p38 MAPKs which play an important role in the cascades of cellular responses evoked by extracellular stimuli such as pro-inflammatory cytokines or physical stress leading to direct activation of transcription factors such as ELK1 and ATF2. Accordingly, p38 MAPKs phosphorylate a broad range of proteins and it has been estimated that they may have approximately 200 to 300 substrates each. MAPK13 is one of the less studied p38 MAPK isoforms. Some of the targets are downstream kinases such as MAPKAPK2, which are activated through phosphorylation and further phosphorylate additional targets. Plays a role in the regulation of protein translation by phosphorylating and inactivating EEF2K. Involved in cytoskeletal remodeling through phosphorylation of MAPT and STMN1. Mediates UV irradiation induced up-regulation of the gene expression of CXCL14. Plays an important role in the regulation of epidermal keratinocyte differentiation, apoptosis and skin tumor development. Phosphorylates the transcriptional activator MYB in response to stress which leads to rapid MYB degradation via a proteasome-dependent pathway. MAPK13 also phosphorylates and down-regulates PRKD1 during regulation of insulin secretion in pancreatic beta cells. This Mus musculus (Mouse) protein is Mitogen-activated protein kinase 13 (Mapk13).